The chain runs to 602 residues: ATP-dependent DNA helicase II subunit 1 (602 aa).

The region spanning Phe268–Ser483 is the Ku domain. 3 positions are modified to phosphoserine: Ser370, Ser371, and Ser372.

This sequence belongs to the ku70 family. As to quaternary structure, heterodimer of YKU70/HDF1 and YKU80/HDF2. Sumoylated by MMS21.

The protein resides in the nucleus. It is found in the chromosome. The protein localises to the telomere. The catalysed reaction is ATP + H2O = ADP + phosphate + H(+). In terms of biological role, single-stranded DNA-dependent ATP-dependent helicase. Involved in non-homologous end joining (NHEJ) DNA double strand break repair. DNA-binding is sequence-independent but has a high affinity to nicks in double-stranded DNA and to the ends of duplex DNA. Binds to naturally occurring chromosomal ends, and therefore provides chromosomal end protection. Appears to have a role in recruitment of telomerase and CDC13 to the telomere and the subsequent telomere elongation. Required also for telomere recombination to repair telomeric ends in the absence of telomerase. KU70, of the KU70/KU80 heterodimer, binds to the stem loop of TLC1, the RNA component of telomerase. Involved in telomere maintenance. Interacts with telomeric repeats and subtelomeric sequences thereby controlling telomere length and protecting against subtelomeric rearrangement. Maintains telomeric chromatin, which is involved in silencing the expression of genes located at the telomere. Required for mating-type switching. The chain is ATP-dependent DNA helicase II subunit 1 (YKU70) from Saccharomyces cerevisiae (strain ATCC 204508 / S288c) (Baker's yeast).